We begin with the raw amino-acid sequence, 319 residues long: MRVLTGLQPSGDLHIGNYFGAIKQMVDAQEKSQMFMFIANYHAMTSSQDGEKLKQNSLKAAAAFLSLGIDPQKSVFWLQSDVKEVMELYWILSQFTPMGLLERAHSYKDKVAKGLSASHGLFSYPVLMAADILLFDTRIVPVGKDQIQHVEIARDIALKVNNEWGEIFTLPEARVNEEVAVVVGTDGAKMSKSYQNTIDIFSSEKTLKKQISSIVTDSTALEDPKDHENCNIFKIAKLFLDESGQKELQIRYEKGGEGYGHFKIYLNELVNAYFKEAREKYNELLEKPSHLKEILDFGATKARKIAQEKMQKIYEKIGL.

Residues 8–10 and 16–17 each bind ATP; these read QPS and GN. Positions 9 to 17 match the 'HIGH' region motif; the sequence is PSGDLHIGN. D131 provides a ligand contact to L-tryptophan. Residues 143 to 145, V182, and 189 to 193 each bind ATP; these read GKD and KMSKS. The 'KMSKS' region signature appears at 189-193; that stretch reads KMSKS.

This sequence belongs to the class-I aminoacyl-tRNA synthetase family. As to quaternary structure, homodimer.

It is found in the cytoplasm. It carries out the reaction tRNA(Trp) + L-tryptophan + ATP = L-tryptophyl-tRNA(Trp) + AMP + diphosphate + H(+). In terms of biological role, catalyzes the attachment of tryptophan to tRNA(Trp). This Campylobacter jejuni subsp. jejuni serotype O:2 (strain ATCC 700819 / NCTC 11168) protein is Tryptophan--tRNA ligase.